A 170-amino-acid polypeptide reads, in one-letter code: MMIRPIVKYPDPVLQQPAEPVTEFNEELRALVDDMFESMYEAKGIGLAAPQIGISKRLTVIDLSFKENPDEKIVLINPEIIHREGRQYEEEGCLSLPDIREKVVRAEKVTVRAQNLDGEWFEMDGEELLSRAFQHEIDHLDGVLFIFRISALKRDLVLRRIRKMQRAGEW.

Fe cation-binding residues include Cys93 and His135. The active site involves Glu136. His139 provides a ligand contact to Fe cation.

Belongs to the polypeptide deformylase family. It depends on Fe(2+) as a cofactor.

It carries out the reaction N-terminal N-formyl-L-methionyl-[peptide] + H2O = N-terminal L-methionyl-[peptide] + formate. In terms of biological role, removes the formyl group from the N-terminal Met of newly synthesized proteins. Requires at least a dipeptide for an efficient rate of reaction. N-terminal L-methionine is a prerequisite for activity but the enzyme has broad specificity at other positions. This is Peptide deformylase from Acidobacterium capsulatum (strain ATCC 51196 / DSM 11244 / BCRC 80197 / JCM 7670 / NBRC 15755 / NCIMB 13165 / 161).